The primary structure comprises 1174 residues: Creatine kinase, flagellar (1174 aa).

Residues 1 to 14 show a composition bias toward polar residues; sequence MGCAASSQQTTATG. The segment at 1–62 is disordered; sequence MGCAASSQQT…PFVEPDPNYP (62 aa). Over residues 18–39 the composition is skewed to low complexity; it reads AAGEKANPAPANNNPNAANKAE. Residues 53–139 form the Phosphagen kinase N-terminal 1 domain; it reads PFVEPDPNYP…FDPTIDKRHN (87 aa). Residues 61-414 form a 1; approximate repeat; the sequence is YPDLSKHNNY…EKALEKGSDI (354 aa). In terms of domain architecture, Phosphagen kinase C-terminal 1 spans 166–408; sequence YVLSCRVRTG…KKLIELEKAL (243 aa). Residues 169–173, His232, Arg277, and 333–337 each bind ATP; these read SCRVR and RAGVH. Residues 426 to 512 form the Phosphagen kinase N-terminal 2 domain; it reads RAEQVKEGYP…FDPVIDARHG (87 aa). Residues 434–787 form a 2; approximate repeat; it reads YPDLSKHNNH…EKKLEKGEDI (354 aa). Residues 539–781 form the Phosphagen kinase C-terminal 2 domain; it reads YVLSCRVRTG…ELLVQMEKKL (243 aa). ATP-binding positions include 542–546, His605, Arg706, 734–739, and Asp749; these read SCRVR and RGTGGV. The region spanning 800 to 886 is the Phosphagen kinase N-terminal 3 domain; the sequence is PIKPFSYDYP…FDPVISARHG (87 aa). The 3; approximate repeat unit spans residues 808–1161; the sequence is YPDFSLHNNW…EKALMKGEDI (354 aa). In terms of domain architecture, Phosphagen kinase C-terminal 3 spans 913–1155; the sequence is FVLSCRVRTG…KLLVNLEKAL (243 aa).

The protein belongs to the ATP:guanido phosphotransferase family. Monomer.

It localises to the cytoplasm. It is found in the cytoskeleton. The protein resides in the flagellum axoneme. The enzyme catalyses creatine + ATP = N-phosphocreatine + ADP + H(+). Functionally, this axonemal protein participates in an energy shuttle that utilizes phosphocreatine to transfer the energy from ATP generated by the mitochondrion in the sperm head to dynein in the distal portions of the flagellum. The protein is Creatine kinase, flagellar of Strongylocentrotus purpuratus (Purple sea urchin).